The following is a 443-amino-acid chain: Mitochondrial enolase superfamily member 1 (443 aa).

Substrate-binding positions include 24 to 26 (GSD) and Tyr-34. A Phosphoserine modification is found at Ser-148. Residue Lys-220 coordinates substrate. The active-site Proton donor/acceptor is Lys-222. Residue Asp-250 coordinates Mg(2+). Substrate is bound by residues Asn-252, Glu-276, Glu-305, 355-357 (HAG), and Glu-386. Residues Glu-276 and Glu-305 each contribute to the Mg(2+) site. The active site involves His-355.

This sequence belongs to the mandelate racemase/muconate lactonizing enzyme family. ENOSF1 subfamily. Mg(2+) serves as cofactor. In terms of processing, could be sumoylated.

It is found in the mitochondrion. The enzyme catalyses L-fuconate = 2-dehydro-3-deoxy-L-fuconate + H2O. Plays a role in the catabolism of L-fucose, a sugar that is part of the carbohydrates that are attached to cellular glycoproteins. Catalyzes the dehydration of L-fuconate to 2-keto-3-deoxy-L-fuconate by the abstraction of the 2-proton to generate an enediolate intermediate that is stabilized by the magnesium ion. May down-regulate thymidylate synthase activity, possibly already at the RNA level, by promoting the degradation of TYMS mRNA via an antisense RNA-based mechanism. The protein is Mitochondrial enolase superfamily member 1 (ENOSF1) of Bos taurus (Bovine).